The sequence spans 53 residues: Conotoxin Cal6.27 (53 aa).

The N-terminal stretch at 1 to 24 (MKLTCVLIAAMLLLAVCQLDSADA) is a signal peptide. Cystine bridges form between Cys29–Cys43, Cys36–Cys47, and Cys42–Cys51.

Belongs to the conotoxin O1 superfamily. Expressed by the venom duct.

The protein resides in the secreted. Functionally, probable neurotoxin. This chain is Conotoxin Cal6.27, found in Californiconus californicus (California cone).